The sequence spans 176 residues: Lactoylglutathione lyase (176 aa).

The 145-residue stretch at 23-167 folds into the VOC domain; sequence VFNHTMLRVK…DGYWVEIVQA (145 aa). Position 26 (H26) interacts with Ni(2+). R30 lines the substrate pocket. A Ni(2+)-binding site is contributed by E92. The substrate site is built by N96, R114, and H118. Positions 118 and 163 each coordinate Ni(2+). The Proton donor/acceptor role is filled by E163.

The protein belongs to the glyoxalase I family. Monomer. Ni(2+) serves as cofactor. The cofactor is Zn(2+).

The enzyme catalyses (R)-S-lactoylglutathione = methylglyoxal + glutathione. The protein operates within secondary metabolite metabolism; methylglyoxal degradation; (R)-lactate from methylglyoxal: step 1/2. Its function is as follows. Catalyzes the conversion of hemimercaptal, formed from methylglyoxal and glutathione, to S-lactoylglutathione. This is Lactoylglutathione lyase (gloA) from Pseudomonas aeruginosa (strain ATCC 15692 / DSM 22644 / CIP 104116 / JCM 14847 / LMG 12228 / 1C / PRS 101 / PAO1).